The primary structure comprises 410 residues: Methylamine dehydrogenase heavy chain (410 aa).

An N-terminal signal peptide occupies residues 1 to 35; it reads MTHAYTKVRQALCYGSATLGAAALAALIAAGSAAA.

It belongs to the aromatic amine dehydrogenase heavy chain family. As to quaternary structure, tetramer of two light and two heavy chains.

The protein resides in the periplasm. The catalysed reaction is 2 oxidized [amicyanin] + methylamine + H2O = 2 reduced [amicyanin] + formaldehyde + NH4(+) + 2 H(+). Its function is as follows. Methylamine dehydrogenase carries out the oxidation of methylamine. Electrons are passed from methylamine dehydrogenase to amicyanin. This Methylorubrum extorquens (strain ATCC 14718 / DSM 1338 / JCM 2805 / NCIMB 9133 / AM1) (Methylobacterium extorquens) protein is Methylamine dehydrogenase heavy chain (mauB).